The chain runs to 196 residues: Probable malonic semialdehyde reductase RutE (196 aa).

Belongs to the nitroreductase family. HadB/RutE subfamily. FMN serves as cofactor.

The catalysed reaction is 3-hydroxypropanoate + NADP(+) = 3-oxopropanoate + NADPH + H(+). Its function is as follows. May reduce toxic product malonic semialdehyde to 3-hydroxypropionic acid, which is excreted. The polypeptide is Probable malonic semialdehyde reductase RutE (Yersinia enterocolitica serotype O:8 / biotype 1B (strain NCTC 13174 / 8081)).